Consider the following 233-residue polypeptide: Esterase FUS5 (233 aa).

Active-site charge relay system residues include Ser-105, Asp-159, and His-187.

The protein belongs to the LovG family.

Esterase; part of the gene cluster that mediates the biosynthesis of the mycotoxin fusarin C. Within the cluster, FUS1, FUS2, FUS8 and FUS9 are sufficient for fusarin production. The other FUS cluster members are not essential for fusarin C biosynthesis. The chain is Esterase FUS5 from Gibberella fujikuroi (strain CBS 195.34 / IMI 58289 / NRRL A-6831) (Bakanae and foot rot disease fungus).